Reading from the N-terminus, the 697-residue chain is Elongation factor G 2 (697 aa).

One can recognise a tr-type G domain in the interval 5-280; it reads SKYRNIGIFA…AVVDYLPDPV (276 aa). GTP-binding positions include 14–21, 78–82, and 132–135; these read AHVDAGKT, DTPGH, and NKLD.

The protein belongs to the TRAFAC class translation factor GTPase superfamily. Classic translation factor GTPase family. EF-G/EF-2 subfamily.

It localises to the cytoplasm. In terms of biological role, catalyzes the GTP-dependent ribosomal translocation step during translation elongation. During this step, the ribosome changes from the pre-translocational (PRE) to the post-translocational (POST) state as the newly formed A-site-bound peptidyl-tRNA and P-site-bound deacylated tRNA move to the P and E sites, respectively. Catalyzes the coordinated movement of the two tRNA molecules, the mRNA and conformational changes in the ribosome. The sequence is that of Elongation factor G 2 from Shewanella frigidimarina (strain NCIMB 400).